We begin with the raw amino-acid sequence, 92 residues long: Small ribosomal subunit protein bS20 (92 aa).

Residues 1–11 show a composition bias toward basic residues; sequence MANIKSQKKRI. Residues 1-22 form a disordered region; the sequence is MANIKSQKKRIRQNEKARLRNK.

The protein belongs to the bacterial ribosomal protein bS20 family.

Binds directly to 16S ribosomal RNA. The protein is Small ribosomal subunit protein bS20 of Thermobifida fusca (strain YX).